The sequence spans 117 residues: Small ribosomal subunit protein bS6 (117 aa).

Positions 92 to 117 (KVDEHPEGPSIQMQKREERDNRRERR) are disordered. The span at 105–117 (QKREERDNRRERR) shows a compositional bias: basic and acidic residues.

This sequence belongs to the bacterial ribosomal protein bS6 family.

In terms of biological role, binds together with bS18 to 16S ribosomal RNA. In Dinoroseobacter shibae (strain DSM 16493 / NCIMB 14021 / DFL 12), this protein is Small ribosomal subunit protein bS6.